The primary structure comprises 205 residues: GTP cyclohydrolase-2 (205 aa).

49–53 (RLHSE) is a GTP binding site. Zn(2+) is bound by residues C54, C65, and C67. GTP-binding positions include Q70, 92–94 (EGR), and T114. Catalysis depends on D126, which acts as the Proton acceptor. Residue R128 is the Nucleophile of the active site. GTP contacts are provided by T149 and K154.

This sequence belongs to the GTP cyclohydrolase II family. Requires Zn(2+) as cofactor.

It carries out the reaction GTP + 4 H2O = 2,5-diamino-6-hydroxy-4-(5-phosphoribosylamino)-pyrimidine + formate + 2 phosphate + 3 H(+). It functions in the pathway cofactor biosynthesis; riboflavin biosynthesis; 5-amino-6-(D-ribitylamino)uracil from GTP: step 1/4. In terms of biological role, catalyzes the conversion of GTP to 2,5-diamino-6-ribosylamino-4(3H)-pyrimidinone 5'-phosphate (DARP), formate and pyrophosphate. The chain is GTP cyclohydrolase-2 from Pseudomonas aeruginosa (strain UCBPP-PA14).